Consider the following 437-residue polypeptide: Putative permease IIC component (437 aa).

The 436-residue stretch at 2–437 folds into the PTS EIIC type-2 domain; that stretch reads FDYILSLGGT…LFLRKRELSE (436 aa). 12 helical membrane-spanning segments follow: residues 5–25, 35–55, 88–108, 134–154, 173–193, 215–235, 236–256, 302–322, 325–345, 354–374, 385–405, and 410–430; these read ILSL…GLIF, AGVT…MAID, ATAI…AMLV, LMTG…ALSL, ISIP…LDAI, GMVG…GLAA, GEGF…MVLF, TIAV…ILPG, VLPL…TVIH, ISGV…APYF, FAGE…GWSI, and SLGI…VLFL.

The protein localises to the cell inner membrane. Functionally, the phosphoenolpyruvate-dependent sugar phosphotransferase system (PTS), a major carbohydrate active -transport system, catalyzes the phosphorylation of incoming sugar substrates concomitant with their translocation across the cell membrane. The sequence is that of Putative permease IIC component (sgcC) from Escherichia coli (strain K12).